The chain runs to 1118 residues: MVSSILKFVILIHSTFHSTFAQNLPDTTVAPKTKRTIKIGIAAAQRTQTSSIGWSVCGGAVPMAIERLREFGYVKDFDFEFIVDYTECDQGSVVRAGIEFIKTHKVDVIIGPPCAQALRVMSFLAENYKKPVLGWGFVSDTDLSDVIRFPYLTTVIPNSLMLGYAASKMLTVYNWGRVAMLYYYSDIKYCSGVMNDVEATFNNPSTPNVNIVIKAEIYLNDNETTDIVFQSVKSRARIIFWCTQTAIEKRDYLIKIATHDMIGDEYVHIMLSMRNIAFGAQTSLGKPTFSQSGLTPIWESFTEGTDDFEKMVKQAATRMFVLDVNSEVADKKYLDYLQKNIMKAVQSPPMNCSTVECMTANTTIMGGYARQLFDVVYLYGVALTNTNSTDPAVYDDVDVIVPQFVTSFQGMTGKVVISPNLTRMPIFQLYGLNSDYEQVALAEFTYIDPIMNVTLSYKEEGGAVWYFYGNSRPLDIPICGFLGKFCPISFWEQYMILAIVSISVIVLMVIIMIIGCLCVISAKHAEQARTNAEWQVPFVNLMESEKQIRSNATSRRSLQSAPSISTGHSGVTTVSDFCENYTMMMYEKEMVLTAKYQYTHLTKADKERFVKMRKLDHENINRFIGLSIDSAHFIAVTKLCSRGSLQDILSRGNFSMDYFFMFCIIRDVAKGLEYLHKTFLRLHGNLRSATCLVNDSWQVKLAEYGMDNLVEEQTPPKKRLLWVAPEVLRGSLSVSQMEPSADIYSFAIIASEILTKKEAWDILDRKEDCEALIALVKDCWAEVPEDRPTAENICSQMKGLVSKQKTNLMDHVFNMLEEYTSTLEEEIEERTKELTLEKKKADILLSRMLPKQVAERLKAGQTVEPEGFDSVTVFFSDVVKFTILASKCSPFQTVNLLNDLYSNFDTIIEQHGVYKVESIGDGYLCVSGLPTRNGYAHIKQIVDMSLKFMEYCRSFKIPHLPRENVELRIGVNSGPCVAGVVGLSMPRYCLFGDTVNTASRMESNGKPSLIHLTSDAHLLLLTHYPNHYDTSSRGEVIIKGKGVMETFWVHGRIDDIAEPTELRSICKPSTVANERWITPPAPKPEIRSVSSHGSRPPSVYDPLQDHRKFKMDTLKVAN.

A signal peptide spans 1-21 (MVSSILKFVILIHSTFHSTFA). Topologically, residues 22–494 (QNLPDTTVAP…FCPISFWEQY (473 aa)) are extracellular. 6 N-linked (GlcNAc...) asparagine glycosylation sites follow: Asn222, Asn351, Asn361, Asn387, Asn420, and Asn452. The chain crosses the membrane as a helical span at residues 495–515 (MILAIVSISVIVLMVIIMIIG). Residues 516 to 1118 (CLCVISAKHA…FKMDTLKVAN (603 aa)) are Cytoplasmic-facing. Positions 558–875 (LQSAPSISTG…EGFDSVTVFF (318 aa)) constitute a Protein kinase domain. A Guanylate cyclase domain is found at 872 to 1002 (TVFFSDVVKF…DTVNTASRME (131 aa)). The segment at 1076 to 1103 (WITPPAPKPEIRSVSSHGSRPPSVYDPL) is disordered.

Belongs to the adenylyl cyclase class-4/guanylyl cyclase family. In terms of tissue distribution, expressed bilaterally in AWA and ASI sensory neurons and in RIA and PVT interneurons.

It localises to the cell membrane. The enzyme catalyses GTP = 3',5'-cyclic GMP + diphosphate. Functionally, guanylate cyclase involved in the production of the second messenger cGMP. This is Receptor-type guanylate cyclase gcy-2 from Caenorhabditis elegans.